The chain runs to 256 residues: Myeloblastin (256 aa).

The signal sequence occupies residues 1-25; it reads MAHRPPSPALASVLLALLLSGAARA. Positions 26–27 are excised as a propeptide; that stretch reads AE. Positions 28–248 constitute a Peptidase S1 domain; it reads IVGGHEAQPH…YVDWIRSTLR (221 aa). An intrachain disulfide couples Cys-56 to Cys-72. Residues His-71 and Asp-118 each act as charge relay system in the active site. N-linked (GlcNAc...) asparagine glycans are attached at residues Asn-129 and Asn-174. 3 cysteine pairs are disulfide-bonded: Cys-152–Cys-209, Cys-182–Cys-188, and Cys-199–Cys-224. Ser-203 serves as the catalytic Charge relay system. Residues 249–256 constitute a propeptide that is removed on maturation; the sequence is RVEAKGRP.

Belongs to the peptidase S1 family. Elastase subfamily. As to quaternary structure, may form dimers. Interacts with CD177; the interaction tethers PRTN3 to the cell surface; the interaction is direct. Interacts with SERPINB1. Interacts with ADGRG3. Expressed in polymorphonuclear leukocytes (at protein level). Expressed in neutrophils (at protein level). Expressed in differentiating neutrophils.

It localises to the cytoplasmic granule. It is found in the secreted. Its subcellular location is the cell membrane. The protein localises to the membrane raft. The catalysed reaction is Hydrolysis of proteins, including elastin, by preferential cleavage: -Ala-|-Xaa- &gt; -Val-|-Xaa-.. Its activity is regulated as follows. Inhibited by phenylmethanesulfonyl fluoride (PMSF) and diisopropyl fluorophosphate (DFP). In terms of biological role, serine protease that degrades elastin, fibronectin, laminin, vitronectin, and collagen types I, III, and IV (in vitro). By cleaving and activating receptor F2RL1/PAR-2, enhances endothelial cell barrier function and thus vascular integrity during neutrophil transendothelial migration. Plays a role in neutrophil transendothelial migration, probably when associated with CD177. Triggers inflammatory processes in neutrophils by interacting with ADGRG3 upstream of F2RL1/PAR2 activation. This Homo sapiens (Human) protein is Myeloblastin (PRTN3).